We begin with the raw amino-acid sequence, 67 residues long: DNA-directed RNA polymerase subunit omega (67 aa).

It belongs to the RNA polymerase subunit omega family. The RNAP catalytic core consists of 2 alpha, 1 beta, 1 beta' and 1 omega subunit. When a sigma factor is associated with the core the holoenzyme is formed, which can initiate transcription.

It catalyses the reaction RNA(n) + a ribonucleoside 5'-triphosphate = RNA(n+1) + diphosphate. Its function is as follows. Promotes RNA polymerase assembly. Latches the N- and C-terminal regions of the beta' subunit thereby facilitating its interaction with the beta and alpha subunits. This chain is DNA-directed RNA polymerase subunit omega, found in Methylibium petroleiphilum (strain ATCC BAA-1232 / LMG 22953 / PM1).